The chain runs to 910 residues: E3 ubiquitin-protein ligase HUL5 (910 aa).

Met1 is subject to N-acetylmethionine. The tract at residues 1–25 is disordered; the sequence is MLNFTGQTRRRNVNLGNRTRNSKKD. Positions 810 to 910 constitute an HECT domain; sequence YGGYKEEDQT…INSGARFDLS (101 aa). Cys878 acts as the Glycyl thioester intermediate in catalysis.

Belongs to the UBE3C family. In terms of assembly, interacts with 19S proteasomes.

The protein resides in the cytoplasm. The protein localises to the cytosol. It localises to the nucleus. The enzyme catalyses S-ubiquitinyl-[E2 ubiquitin-conjugating enzyme]-L-cysteine + [acceptor protein]-L-lysine = [E2 ubiquitin-conjugating enzyme]-L-cysteine + N(6)-ubiquitinyl-[acceptor protein]-L-lysine.. The protein operates within protein modification; protein ubiquitination. Functionally, non-essential E3 ubiquitin-protein ligase that specifically catalyzes 'Lys-29'- and 'Lys-48'-linked polyubiquitin chains. Accepts ubiquitin from an E2 ubiquitin-conjugating enzyme in the form of a thioester and then directly transfers the ubiquitin to targeted substrates. Associates with the proteasome and promotes elongation of ubiquitin chains on substrates bound to the proteasome. Elongation of ubiquitin chains on substrates bound to the proteasome promotes proteasomal processivity. Also promotes ubiquitin elongation of 26S proteasome subunit RPN10. Involved in the stress response required to maintain cell fitness following heat-shock: acts by mediating ubiquitination of cytosolic misfolded proteins, leading to their subsequent degradation. This is E3 ubiquitin-protein ligase HUL5 from Saccharomyces cerevisiae (strain ATCC 204508 / S288c) (Baker's yeast).